The sequence spans 1176 residues: Nitrite reductase [NAD(P)H] (1176 aa).

The tract at residues 1–23 (MANTSLDMASSTSPSPSPESTTT) is disordered. Residues 10–23 (SSTSPSPSPESTTT) show a composition bias toward low complexity. Position 26 to 60 (26 to 60 (KRIVVVGLGMVGIAFIEKLIKLDTQRQYEIVVIGE)) interacts with FAD. 183 to 215 (STGVVVGGGLLGLEAAKALMDLQVFGRVVVIER) serves as a coordination point for NAD(+). [2Fe-2S] cluster-binding residues include cysteine 496, cysteine 498, cysteine 531, and cysteine 534. [4Fe-4S] cluster-binding residues include cysteine 717, cysteine 723, cysteine 757, and cysteine 761. Cysteine 761 is a siroheme binding site. The 153-residue stretch at 942-1094 (SYFQGADDLP…VEERDDGMVY (153 aa)) folds into the Rieske; atypical domain. Cysteine 981 and histidine 983 together coordinate [2Fe-2S] cluster. 2 stretches are compositionally biased toward low complexity: residues 998 to 1008 (PSPSSCSSSAL) and 1030 to 1049 (PTSS…TNPS). Residues 998–1051 (PSPSSCSSSALPPSPPSTPPRSSSPVTSPPQSPTSSATPATTASSSCTTNPSGP) are disordered. Positions 1058 and 1061 each coordinate [2Fe-2S] cluster. Positions 1124–1139 (LRELDELNKSKGVEGK) are enriched in basic and acidic residues. The interval 1124 to 1157 (LRELDELNKSKGVEGKKGRRGRKPGASEAGKEVG) is disordered.

It belongs to the nitrite and sulfite reductase 4Fe-4S domain family. As to quaternary structure, homodimer. Siroheme is required as a cofactor. It depends on [4Fe-4S] cluster as a cofactor. FAD serves as cofactor. The cofactor is [2Fe-2S] cluster.

It catalyses the reaction NH4(+) + 3 NADP(+) + 2 H2O = nitrite + 3 NADPH + 5 H(+). The enzyme catalyses NH4(+) + 3 NAD(+) + 2 H2O = nitrite + 3 NADH + 5 H(+). The protein operates within nitrogen metabolism; nitrate reduction (assimilation). This is Nitrite reductase [NAD(P)H] (nit-6) from Neurospora crassa (strain ATCC 24698 / 74-OR23-1A / CBS 708.71 / DSM 1257 / FGSC 987).